Consider the following 288-residue polypeptide: Phytanoyl-CoA dioxygenase domain-containing protein 1 homolog (288 aa).

2-oxoglutarate contacts are provided by residues lysine 95, methionine 134, 149–151, and tryptophan 167; that span reads HVD. Positions 149 and 151 each coordinate Fe cation. Fe cation is bound at residue histidine 242. 2-oxoglutarate-binding residues include serine 244 and arginine 253.

Belongs to the PhyH family. PHYHD1 subfamily. Requires Fe cation as cofactor.

Has alpha-ketoglutarate-dependent dioxygenase activity. Does not show detectable activity towards fatty acid CoA thioesters. Is not expected to be active with phytanoyl CoA. This Caenorhabditis elegans protein is Phytanoyl-CoA dioxygenase domain-containing protein 1 homolog.